Consider the following 62-residue polypeptide: Short neurotoxin A (62 aa).

Over residues 1-16 the composition is skewed to polar residues; that stretch reads RRCFNHPSSQPQTNKS. The disordered stretch occupies residues 1 to 21; the sequence is RRCFNHPSSQPQTNKSCPPGE. 4 cysteine pairs are disulfide-bonded: C3–C24, C17–C41, C43–C54, and C55–C60.

It belongs to the three-finger toxin family. Short-chain subfamily. Type I alpha-neurotoxin sub-subfamily. Expressed by the venom gland.

Its subcellular location is the secreted. In terms of biological role, binds to muscle nicotinic acetylcholine receptor (nAChR) and inhibit acetylcholine from binding to the receptor, thereby impairing neuromuscular transmission. The chain is Short neurotoxin A from Laticauda crockeri (Crocker's sea snake).